The primary structure comprises 513 residues: ATP synthase subunit alpha (513 aa).

169-176 (GDRQTGKT) is an ATP binding site.

The protein belongs to the ATPase alpha/beta chains family. F-type ATPases have 2 components, CF(1) - the catalytic core - and CF(0) - the membrane proton channel. CF(1) has five subunits: alpha(3), beta(3), gamma(1), delta(1), epsilon(1). CF(0) has three main subunits: a(1), b(2) and c(9-12). The alpha and beta chains form an alternating ring which encloses part of the gamma chain. CF(1) is attached to CF(0) by a central stalk formed by the gamma and epsilon chains, while a peripheral stalk is formed by the delta and b chains.

Its subcellular location is the cell inner membrane. The catalysed reaction is ATP + H2O + 4 H(+)(in) = ADP + phosphate + 5 H(+)(out). Its function is as follows. Produces ATP from ADP in the presence of a proton gradient across the membrane. The alpha chain is a regulatory subunit. The polypeptide is ATP synthase subunit alpha (Shewanella loihica (strain ATCC BAA-1088 / PV-4)).